Reading from the N-terminus, the 258-residue chain is DNA repair protein RecO (258 aa).

It belongs to the RecO family.

In terms of biological role, involved in DNA repair and RecF pathway recombination. This Syntrophotalea carbinolica (strain DSM 2380 / NBRC 103641 / GraBd1) (Pelobacter carbinolicus) protein is DNA repair protein RecO.